Here is a 1024-residue protein sequence, read N- to C-terminus: Beta-galactosidase (1024 aa).

Asn-103 and Asp-202 together coordinate substrate. Asp-202 lines the Na(+) pocket. The Mg(2+) site is built by Glu-417, His-419, and Glu-462. Residues Glu-462 and 538 to 541 each bind substrate; that span reads EYAH. The active-site Proton donor is the Glu-462. Glu-538 acts as the Nucleophile in catalysis. Asn-598 contacts Mg(2+). The Na(+) site is built by Phe-602 and Asn-605. The substrate site is built by Asn-605 and Trp-1000.

The protein belongs to the glycosyl hydrolase 2 family. As to quaternary structure, homotetramer. It depends on Mg(2+) as a cofactor. The cofactor is Na(+).

The enzyme catalyses Hydrolysis of terminal non-reducing beta-D-galactose residues in beta-D-galactosides.. The protein is Beta-galactosidase of Escherichia coli O1:K1 / APEC.